We begin with the raw amino-acid sequence, 385 residues long: Taurine hydroxylase-like protein SAT17 (385 aa).

It participates in mycotoxin biosynthesis. Its function is as follows. Taurine hydroxylase-like protein; part of the satratoxin SC3 cluster involved in the biosynthesis of satratoxins, trichothecene mycotoxins that are associated with human food poisonings. Satratoxins are suggested to be made by products of multiple gene clusters (SC1, SC2 and SC3) that encode 21 proteins in all, including polyketide synthases, acetyltransferases, and other enzymes expected to modify the trichothecene skeleton. SC1 encodes 10 proteins, SAT1 to SAT10. The largest are SAT8, which encodes a putative polyketide synthase (PKS) with a conventional non-reducing architecture, and SAT10, a putative protein containing four ankyrin repeats and thus may be involved in protein scaffolding. The putative short-chain reductase SAT3 may assist the PKS in some capacity. SAT6 contains a secretory lipase domain and acts probably as a trichothecene esterase. SAT5 encodes a putative acetyltransferase, and so, with SAT6, may affect endogenous protection from toxicity. The probable transcription factor SAT9 may regulate the expression of the SC1 cluster. SC2 encodes proteins SAT11 to SAT16, the largest of which encodes the putative reducing PKS SAT13. SAT11 is a cytochrome P450 monooxygenase, while SAT14 and SAT16 are probable acetyltransferases. The SC2 cluster may be regulated by the transcription factor SAT15. SC3 is a small cluster that encodes 5 proteins, SAT17 to SAT21. SAT21 is a putative MFS-type transporter which may have a role in exporting secondary metabolites. The four other proteins putatively encoded in SC3 include the taurine hydroxylase-like protein SAT17, the O-methyltransferase SAT18, the acetyltransferase SAT19, and the Cys6-type zinc finger SAT20, the latter being probably involved in regulation of SC3 expression. In Stachybotrys chartarum (strain CBS 109288 / IBT 7711) (Toxic black mold), this protein is Taurine hydroxylase-like protein SAT17.